We begin with the raw amino-acid sequence, 190 residues long: METETKTLPLENASILSEGSLQEGHRLWIGNLDPKITEYHLLKLLQKFGKVKQFDFLFHKSGALEGQPRGYCFVNFETKQEAEQAIQCLNGKLALSKKLVVRWAHAQVKRYDHNKNDKILPISLEPSSSTEPAQSNLSVTAKIKAIEAKLKMMAENPDAEYPAAPVYSYFKPPDKKRTTPYSRTAWKSRR.

In terms of domain architecture, RRM spans 25 to 106 (HRLWIGNLDP…KKLVVRWAHA (82 aa)). A disordered region spans residues 166–190 (VYSYFKPPDKKRTTPYSRTAWKSRR).

The chain is Probable RNA-binding protein 18 (Rbm18) from Mus musculus (Mouse).